The chain runs to 487 residues: Glutamyl-tRNA(Gln) amidotransferase subunit A (487 aa).

Active-site charge relay system residues include lysine 79 and serine 158. Catalysis depends on serine 182, which acts as the Acyl-ester intermediate.

This sequence belongs to the amidase family. GatA subfamily. As to quaternary structure, heterotrimer of A, B and C subunits.

The catalysed reaction is L-glutamyl-tRNA(Gln) + L-glutamine + ATP + H2O = L-glutaminyl-tRNA(Gln) + L-glutamate + ADP + phosphate + H(+). Allows the formation of correctly charged Gln-tRNA(Gln) through the transamidation of misacylated Glu-tRNA(Gln) in organisms which lack glutaminyl-tRNA synthetase. The reaction takes place in the presence of glutamine and ATP through an activated gamma-phospho-Glu-tRNA(Gln). This is Glutamyl-tRNA(Gln) amidotransferase subunit A from Ehrlichia chaffeensis (strain ATCC CRL-10679 / Arkansas).